The primary structure comprises 668 residues: Probable serine/threonine-protein kinase abkB (668 aa).

Disordered regions lie at residues 88–111 (YTNI…KTTA) and 132–162 (EVEE…DDNK). Over residues 91–105 (IGGTSPNRQSVPENS) the composition is skewed to polar residues. The stretch at 131–163 (KEVEEEIIDKNERGKEQEQENKQQKEQKDDNKS) forms a coiled coil. Positions 138–162 (IDKNERGKEQEQENKQQKEQKDDNK) are enriched in basic and acidic residues. The Protein kinase domain occupies 314-668 (DFERLPINSA…EIPSTYHHHH (355 aa)). Residues 320-328 (INSASLAQV) and Lys346 contribute to the ATP site. The active-site Proton acceptor is Asp478.

The protein belongs to the protein kinase superfamily. ADCK protein kinase family.

The polypeptide is Probable serine/threonine-protein kinase abkB (abkB) (Dictyostelium discoideum (Social amoeba)).